We begin with the raw amino-acid sequence, 127 residues long: Large ribosomal subunit protein bL17 (127 aa).

It belongs to the bacterial ribosomal protein bL17 family. Part of the 50S ribosomal subunit. Contacts protein L32.

This is Large ribosomal subunit protein bL17 from Aeromonas hydrophila subsp. hydrophila (strain ATCC 7966 / DSM 30187 / BCRC 13018 / CCUG 14551 / JCM 1027 / KCTC 2358 / NCIMB 9240 / NCTC 8049).